Here is a 230-residue protein sequence, read N- to C-terminus: Sugar fermentation stimulation protein homolog (230 aa).

Belongs to the SfsA family.

The chain is Sugar fermentation stimulation protein homolog from Clostridium acetobutylicum (strain ATCC 824 / DSM 792 / JCM 1419 / IAM 19013 / LMG 5710 / NBRC 13948 / NRRL B-527 / VKM B-1787 / 2291 / W).